A 413-amino-acid chain; its full sequence is Serine/threonine-protein kinase ppk27 (413 aa).

The Protein kinase domain maps to 102-403; it reads WSINTKITST…LKDFNKHGNF (302 aa). Residues 108–116 and lysine 133 contribute to the ATP site; that span reads ITSTEQREV. Residue aspartate 231 is the Proton acceptor of the active site.

The protein belongs to the protein kinase superfamily. Ser/Thr protein kinase family.

The protein localises to the cytoplasm. It catalyses the reaction L-seryl-[protein] + ATP = O-phospho-L-seryl-[protein] + ADP + H(+). It carries out the reaction L-threonyl-[protein] + ATP = O-phospho-L-threonyl-[protein] + ADP + H(+). The polypeptide is Serine/threonine-protein kinase ppk27 (ppk27) (Schizosaccharomyces pombe (strain 972 / ATCC 24843) (Fission yeast)).